Consider the following 273-residue polypeptide: Protein GMH1 (273 aa).

The tract at residues 1–33 (MSYLPTYSNDLPAGPQGQRRRNNGNENDARQGY) is disordered. S2 is subject to N-acetylserine. Topologically, residues 2-89 (SYLPTYSNDL…QTKNQWARDD (88 aa)) are cytoplasmic. The chain crosses the membrane as a helical span at residues 90–110 (PSFFIFQIALISLSSIIWSIY). At 111–134 (NSGFNNDSDMGALSIIGHFFKSLV) the chain is on the lumenal side. A helical transmembrane segment spans residues 135 to 155 (MMVILDFFIFGFIMATIFYLL). The Cytoplasmic portion of the chain corresponds to 156 to 175 (LNRSHFKFKSSQNSVVEWAY). The helical transmembrane segment at 176 to 196 (CFDVHCNSFLIILLCLYFIQF) threads the bilayer. The Lumenal portion of the chain corresponds to 197–216 (LLLPIINLQNWISLLIGNSL). The helical transmembrane segment at 217–237 (YCFAIGHYFILTFYGYNQLPF) threads the bilayer. Topologically, residues 238-242 (LKNLN) are cytoplasmic. Residues 243–263 (FILLPTLGLSIIYLISLFGID) traverse the membrane as a helical segment. At 264–273 (LSKKLSFYNY) the chain is on the lumenal side.

The protein belongs to the unc-50 family. As to quaternary structure, interacts with GEA1 and GEA2.

It is found in the golgi apparatus membrane. Its subcellular location is the endoplasmic reticulum membrane. This is Protein GMH1 (GMH1) from Saccharomyces cerevisiae (strain ATCC 204508 / S288c) (Baker's yeast).